The primary structure comprises 262 residues: Ribosomal RNA small subunit methyltransferase A (262 aa).

S-adenosyl-L-methionine contacts are provided by N13, L15, G40, E61, D85, and N104.

This sequence belongs to the class I-like SAM-binding methyltransferase superfamily. rRNA adenine N(6)-methyltransferase family. RsmA subfamily.

It localises to the cytoplasm. The catalysed reaction is adenosine(1518)/adenosine(1519) in 16S rRNA + 4 S-adenosyl-L-methionine = N(6)-dimethyladenosine(1518)/N(6)-dimethyladenosine(1519) in 16S rRNA + 4 S-adenosyl-L-homocysteine + 4 H(+). Its function is as follows. Specifically dimethylates two adjacent adenosines (A1518 and A1519) in the loop of a conserved hairpin near the 3'-end of 16S rRNA in the 30S particle. May play a critical role in biogenesis of 30S subunits. This chain is Ribosomal RNA small subunit methyltransferase A, found in Chromobacterium violaceum (strain ATCC 12472 / DSM 30191 / JCM 1249 / CCUG 213 / NBRC 12614 / NCIMB 9131 / NCTC 9757 / MK).